The chain runs to 454 residues: tRNA modification GTPase MnmE (454 aa).

(6S)-5-formyl-5,6,7,8-tetrahydrofolate is bound by residues arginine 23, glutamate 80, and lysine 120. The 162-residue stretch at glycine 216 to glycine 377 folds into the TrmE-type G domain. Asparagine 226 contacts K(+). Residues asparagine 226–serine 231, threonine 245–threonine 251, aspartate 270–glycine 273, asparagine 335–aspartate 338, and serine 358–arginine 360 each bind GTP. Mg(2+) is bound at residue serine 230. K(+)-binding residues include threonine 245, isoleucine 247, and threonine 250. Residue threonine 251 coordinates Mg(2+). Lysine 454 contributes to the (6S)-5-formyl-5,6,7,8-tetrahydrofolate binding site.

This sequence belongs to the TRAFAC class TrmE-Era-EngA-EngB-Septin-like GTPase superfamily. TrmE GTPase family. As to quaternary structure, homodimer. Heterotetramer of two MnmE and two MnmG subunits. It depends on K(+) as a cofactor.

Its subcellular location is the cytoplasm. Its function is as follows. Exhibits a very high intrinsic GTPase hydrolysis rate. Involved in the addition of a carboxymethylaminomethyl (cmnm) group at the wobble position (U34) of certain tRNAs, forming tRNA-cmnm(5)s(2)U34. The sequence is that of tRNA modification GTPase MnmE from Klebsiella pneumoniae (strain 342).